Consider the following 431-residue polypeptide: 3-phosphoshikimate 1-carboxyvinyltransferase (431 aa).

3 residues coordinate 3-phosphoshikimate: Lys-22, Ser-23, and Arg-27. Lys-22 is a phosphoenolpyruvate binding site. Phosphoenolpyruvate is bound by residues Gly-94 and Arg-122. 3-phosphoshikimate contacts are provided by Ser-167, Gln-169, Asp-315, and Lys-342. Gln-169 lines the phosphoenolpyruvate pocket. The Proton acceptor role is filled by Asp-315. Phosphoenolpyruvate-binding residues include Arg-346 and Arg-388.

Belongs to the EPSP synthase family. In terms of assembly, monomer.

It localises to the cytoplasm. It catalyses the reaction 3-phosphoshikimate + phosphoenolpyruvate = 5-O-(1-carboxyvinyl)-3-phosphoshikimate + phosphate. It functions in the pathway metabolic intermediate biosynthesis; chorismate biosynthesis; chorismate from D-erythrose 4-phosphate and phosphoenolpyruvate: step 6/7. Its function is as follows. Catalyzes the transfer of the enolpyruvyl moiety of phosphoenolpyruvate (PEP) to the 5-hydroxyl of shikimate-3-phosphate (S3P) to produce enolpyruvyl shikimate-3-phosphate and inorganic phosphate. This chain is 3-phosphoshikimate 1-carboxyvinyltransferase, found in Pelobacter propionicus (strain DSM 2379 / NBRC 103807 / OttBd1).